A 181-amino-acid polypeptide reads, in one-letter code: Germinal center-associated signaling and motility protein (181 aa).

At serine 102 the chain carries Phosphoserine. The span at 117-128 (AERHKESSRGTE) shows a compositional bias: basic and acidic residues. The tract at residues 117 to 181 (AERHKESSRG…PYETHFSYPQ (65 aa)) is disordered. Tyrosine 150 carries the phosphotyrosine modification.

As to quaternary structure, interacts with ACTB and MYH2; the interaction with MYH2 is increased by IL6-induced phosphorylation. Interacts (via C-terminus) with ARHGEF11 (via DH domain). Interacts with ARHGEF12. Interacts with SYK; the interaction increases after B-cell receptor stimulation, resulting in enhanced SYK autophosphorylation and activity. In terms of processing, phosphorylation on tyrosine residues can be induced by IL6. Phosphorylation is mediated by LYN. Post-translationally, targeted by the ubiquitin E3 ligase subunit FBXO10 to mediate its ubiquitination and degradation. In terms of tissue distribution, highly expressed in normal germinal center (GC) B-cells. Expressed in spleen and, to a lesser extent, bone marrow.

It is found in the cytoplasm. The protein resides in the cell membrane. In terms of biological role, involved in the negative regulation of lymphocyte motility. It mediates the migration-inhibitory effects of IL6. Serves as a positive regulator of the RhoA signaling pathway. Enhancement of RhoA activation results in inhibition of lymphocyte and lymphoma cell motility by activation of its downstream effector ROCK. Is a regulator of B-cell receptor signaling, that acts through SYK kinase activation. This chain is Germinal center-associated signaling and motility protein (Gcsam), found in Mus musculus (Mouse).